The primary structure comprises 985 residues: Translation initiation factor IF-2 (985 aa).

3 stretches are compositionally biased toward basic and acidic residues: residues 49–58 (QYGKKQEKSS), 65–89 (IQREHGRGQGMEDKKEKDQLFRPDN), and 99–113 (VPNRPPDRRYEDKAK). The segment at 49–401 (QYGKKQEKSS…QQSAPPPILD (353 aa)) is disordered. Positions 125 to 136 (SKTTTNSENEQT) are enriched in polar residues. A compositionally biased stretch (low complexity) spans 137–162 (APRQGSAQQSGQGRPQANRPQGSQGR). Composition is skewed to gly residues over residues 180 to 246 (PQGG…GQGR) and 288 to 324 (PQGGQGRPYGDRPQGGQGRHYGDRPQGGQGRPQGAGR). Residues 349–377 (KAPDKTKGDRRKNYEKDGKWADGQIEKNK) are compositionally biased toward basic and acidic residues. Residues 378–391 (LFKGRNNKNKKRQH) are compositionally biased toward basic residues. In terms of domain architecture, tr-type G spans 485–654 (LRPPVVTIMG…LLVAEVHELK (170 aa)). Positions 494–501 (GHVDHGKT) are G1. A GTP-binding site is contributed by 494 to 501 (GHVDHGKT). Residues 519–523 (GITQH) form a G2 region. Residues 540-543 (DTPG) form a G3 region. Residues 540 to 544 (DTPGH) and 594 to 597 (NKMD) each bind GTP. The tract at residues 594-597 (NKMD) is G4. The interval 630–632 (SAK) is G5.

This sequence belongs to the TRAFAC class translation factor GTPase superfamily. Classic translation factor GTPase family. IF-2 subfamily.

The protein localises to the cytoplasm. Functionally, one of the essential components for the initiation of protein synthesis. Protects formylmethionyl-tRNA from spontaneous hydrolysis and promotes its binding to the 30S ribosomal subunits. Also involved in the hydrolysis of GTP during the formation of the 70S ribosomal complex. The protein is Translation initiation factor IF-2 of Desulforamulus reducens (strain ATCC BAA-1160 / DSM 100696 / MI-1) (Desulfotomaculum reducens).